Consider the following 109-residue polypeptide: uncharacterized protein (109 aa).

This is an uncharacterized protein from Saccharomyces cerevisiae (strain ATCC 204508 / S288c) (Baker's yeast).